Here is a 490-residue protein sequence, read N- to C-terminus: MSRMAEQQLYINGGYTSATSGRTFETINPATGEVLATVQAAGREDVDRAVESAQRGQKIWAAMTAMERSRILRRAVDLLRQRNDELARLETLDTGKPLSETAAVDIVTGADVLEYYAGLIPALEGSQIPLRDSSFVYTRREPLGVVAGIGAWNYPIQIALWKSAPALAAGNAMIFKPSEVTPLTALKLAEIYSEAGLPDGVFNVLPGIGAETGQYLTEHPGIAKISFTGGVASGKKVMANSAASSLKEVTMELGGKSPLIIADDADLDLAADIAMMANFYSSGQVCTNGTRVFVPAKQKAEFEHKILERVGRIRPGDLFADDTNFGPLVSFPHRDNVLRYIESGKREGARLLCGGEALKGDGFDNGAWVAPTVFTDCSDEMTIVREEIFGPVMSILSYTDEAEVIRRANATEYGLAAGVVTPNLNRAHRLIHQLEAGICWINSWGESPAEMPVGGYKHSGIGRENGVMTLQSYTQVKSIQVEMGKFQSIF.

K(+)-binding residues include Thr-26, Ile-27, and Asp-93. Position 150–152 (150–152) interacts with NAD(+); sequence GAW. The Charge relay system role is filled by Lys-162. 176 to 179 contributes to the NAD(+) binding site; sequence KPSE. Val-180 contributes to the K(+) binding site. An NAD(+)-binding site is contributed by 230-233; sequence GVAS. A K(+)-binding site is contributed by Leu-246. Residue Glu-252 is the Proton acceptor of the active site. Residues Gly-254, Cys-286, and Glu-387 each contribute to the NAD(+) site. Cys-286 functions as the Nucleophile in the catalytic mechanism. Cys-286 carries the cysteine sulfenic acid (-SOH) modification. K(+) is bound by residues Lys-457 and Gly-460. Glu-464 acts as the Charge relay system in catalysis.

It belongs to the aldehyde dehydrogenase family. Dimer of dimers. It depends on K(+) as a cofactor.

It carries out the reaction betaine aldehyde + NAD(+) + H2O = glycine betaine + NADH + 2 H(+). The protein operates within amine and polyamine biosynthesis; betaine biosynthesis via choline pathway; betaine from betaine aldehyde: step 1/1. In terms of biological role, involved in the biosynthesis of the osmoprotectant glycine betaine. Catalyzes the irreversible oxidation of betaine aldehyde to the corresponding acid. The chain is Betaine aldehyde dehydrogenase from Klebsiella pneumoniae (strain 342).